The chain runs to 553 residues: Urocanate hydratase (553 aa).

Residues 45 to 46 (GG), Gln123, 169 to 171 (GMG), Asp189, Arg194, 235 to 236 (NA), 256 to 260 (QTSAH), 266 to 267 (YV), Tyr315, and Gly485 contribute to the NAD(+) site.

It belongs to the urocanase family. NAD(+) serves as cofactor.

It localises to the cytoplasm. The enzyme catalyses 4-imidazolone-5-propanoate = trans-urocanate + H2O. It participates in amino-acid degradation; L-histidine degradation into L-glutamate; N-formimidoyl-L-glutamate from L-histidine: step 2/3. Catalyzes the conversion of urocanate to 4-imidazolone-5-propionate. In Staphylococcus aureus (strain MRSA252), this protein is Urocanate hydratase.